Reading from the N-terminus, the 5125-residue chain is Usherin (5125 aa).

Positions 1–33 (MYYLALSSGFLGQAIKTSILAYLASVLLAASQG) are cleaved as a signal peptide. N-linked (GlcNAc...) asparagine glycosylation is found at Asn120, Asn229, Asn257, Asn273, Asn414, Asn447, and Asn468. The Laminin N-terminal domain occupies 273 to 513 (NVSLTNREIL…AVDEITIIGR (241 aa)). 39 cysteine pairs are disulfide-bonded: Cys514/Cys523, Cys516/Cys532, Cys534/Cys545, Cys548/Cys568, Cys571/Cys580, Cys573/Cys601, Cys604/Cys613, Cys616/Cys634, Cys637/Cys651, Cys639/Cys658, Cys660/Cys669, Cys672/Cys687, Cys690/Cys704, Cys692/Cys711, Cys713/Cys722, Cys725/Cys740, Cys743/Cys755, Cys745/Cys762, Cys764/Cys773, Cys776/Cys788, Cys791/Cys804, Cys793/Cys811, Cys813/Cys822, Cys825/Cys840, Cys843/Cys857, Cys845/Cys864, Cys866/Cys875, Cys878/Cys893, Cys896/Cys909, Cys898/Cys916, Cys918/Cys927, Cys930/Cys944, Cys947/Cys959, Cys949/Cys966, Cys981/Cys995, Cys998/Cys1010, Cys1000/Cys1017, Cys1019/Cys1028, and Cys1031/Cys1046. 10 consecutive Laminin EGF-like domains span residues 514–570 (CQCH…NCKP), 571–636 (CQCH…VCKH), 637–689 (CDCN…CCRP), 690–742 (CDCN…GCEP), 743–790 (CHCN…ACEV), 791–842 (CDCN…LCLP), 843–895 (CNCE…GCQA), 896–946 (CDCD…GCLP), 947–997 (CLCH…RCRP), and 998–1048 (CHCH…ACSK). N-linked (GlcNAc...) asparagine glycosylation occurs at Asn646. Asn835 and Asn852 each carry an N-linked (GlcNAc...) asparagine glycan. An N-linked (GlcNAc...) asparagine glycan is attached at Asn884. The N-linked (GlcNAc...) asparagine glycan is linked to Asn940. Residue Asn1007 is glycosylated (N-linked (GlcNAc...) asparagine). Fibronectin type-III domains lie at 1054-1142 (PPPR…TKPE), 1146-1240 (GHLN…APPQ), 1241-1356 (RQEP…SAPV), and 1357-1461 (FMAA…AAPA). 6 N-linked (GlcNAc...) asparagine glycosylation sites follow: Asn1067, Asn1149, Asn1170, Asn1221, Asn1304, and Asn1381. Laminin G-like domains follow at residues 1510 to 1697 (TKGT…WEGC) and 1702 to 1879 (EEGV…QDGC). Cystine bridges form between Cys1660/Cys1697 and Cys1850/Cys1879. 29 consecutive Fibronectin type-III domains span residues 1857 to 1943 (TRGA…SAPH), 1945 to 2042 (VPTP…TPQE), 2043 to 2132 (APQE…LPPE), 2133 to 2230 (RVDP…TVPE), 2231 to 2318 (GVPA…APPE), 2319 to 2421 (GTVN…MPPG), 2425 to 2519 (GLLS…TTED), 2520 to 2613 (KPGP…TPEG), 2614 to 2709 (IPGP…TRPS), 2713 to 2806 (GVQP…THPA), 2807 to 2910 (LPQE…TLAG), 2914 to 3005 (RGAT…TWEE), 3009 to 3099 (GMRP…TPSG), 3380 to 3485 (ATEE…TRED), 3486 to 3577 (VPQG…TRGV), 3580 to 3670 (SVPP…AAPQ), 3672 to 3762 (VWVT…TPED), 3765 to 3852 (PPCN…TLEA), 3853 to 3950 (APVG…TLEA), 3951 to 4054 (PPQD…SAPS), 4055 to 4143 (GLMN…APPD), 4144 to 4251 (SQMA…APPD), 4252 to 4344 (GLSP…ASPA), 4345 to 4432 (GVSP…APPE), 4433 to 4517 (DMDP…TSPS), 4518 to 4620 (APSG…IPPL), 4625 to 4720 (PHLE…TGPA), 4721 to 4813 (PPEG…THPA), and 4814 to 4916 (PPSG…TKKE). A disordered region spans residues 1930 to 1950 (SDWSRGRTLGSAPHSVPTPSR).

In terms of assembly, interacts with collagen IV and fibronectin via its laminin EGF-like domains. Interaction with collagen may be required for stable integration into the basement membrane. Interacts with NINL. Interacts with USH1C. Interacts (via the cytoplasmic region) with PDZD7. Component of USH2 complex, composed of ADGRV1, PDZD7, USH2A and WHRN. Interacts with ADGRV1/MASS1 (via N-terminal PDZ domain). Interacts (via the cytoplasmic region) with WHRN. Interacts (via the cytoplasmic region) with VEZT and MYO7A (via MyTH4-FERM domains); the interaction associates VEZT with the USH2 complex at the stereocilia base. Present in the synaptic terminals of inner ear hair cells (at protein level). Predominantly expressed in the retina and cochlea. Weakly expressed in brain and kidney. Detectable from E17 in the neural epithelium, but not in the retinal pigment epithelium (RPE) of the developing retina. After birth, it is expressed at P7 and remains expressed during adulthood.

The protein localises to the secreted. It is found in the cell projection. Its subcellular location is the stereocilium membrane. It localises to the photoreceptor inner segment. In terms of biological role, involved in hearing and vision as member of the USH2 complex. In the inner ear, required for the hair bundle ankle formation, which connects growing stereocilia in developing cochlear hair cells. In retina photoreceptors, the USH2 complex is required for the maintenance of periciliary membrane complex that seems to play a role in regulating intracellular protein transport. This is Usherin (Ush2a) from Rattus norvegicus (Rat).